We begin with the raw amino-acid sequence, 61 residues long: Large ribosomal subunit protein bL28 (61 aa).

This sequence belongs to the bacterial ribosomal protein bL28 family.

This chain is Large ribosomal subunit protein bL28, found in Lacticaseibacillus paracasei (strain ATCC 334 / BCRC 17002 / CCUG 31169 / CIP 107868 / KCTC 3260 / NRRL B-441) (Lactobacillus paracasei).